The primary structure comprises 126 residues: Large ribosomal subunit protein bL21 (126 aa).

The tract at residues 105–126 (KKPSVGPRAKRTKAAPAAEAAE) is disordered.

Contacts protein L20. Part of the 50S ribosomal subunit.

In terms of biological role, this protein binds to 23S rRNA in the presence of protein L20. This Rhodopseudomonas palustris (strain ATCC BAA-98 / CGA009) protein is Large ribosomal subunit protein bL21.